Reading from the N-terminus, the 235-residue chain is Cobalt transport protein CbiM (235 aa).

Transmembrane regions (helical) follow at residues 6-26 (GVLP…FVVH), 43-63 (LLLA…LPSV), 85-105 (MAFM…HGGI), 108-128 (LGAN…GAYV), 133-153 (LGGP…LSTY), and 181-201 (IFAI…ILLF).

The protein belongs to the CbiM family. Forms an energy-coupling factor (ECF) transporter complex composed of an ATP-binding protein (A component, CbiO), a transmembrane protein (T component, CbiQ) and 2 possible substrate-capture proteins (S components, CbiM and CbiN) of unknown stoichimetry.

It is found in the cell membrane. Its pathway is cofactor biosynthesis; adenosylcobalamin biosynthesis. Part of the energy-coupling factor (ECF) transporter complex CbiMNOQ involved in cobalt import. The protein is Cobalt transport protein CbiM of Propionibacterium freudenreichii subsp. shermanii (strain ATCC 9614 / DSM 4902 / CIP 103027 / NCIMB 8099 / CIRM-BIA1).